Here is a 115-residue protein sequence, read N- to C-terminus: Androgen-binding protein homolog (115 aa).

The first 23 residues, 1–23, serve as a signal peptide directing secretion; that stretch reads MKGTLLLLALLVTGELGFQTTEA.

The protein belongs to the secretoglobin family.

The protein localises to the secreted. This chain is Androgen-binding protein homolog, found in Mesocricetus auratus (Golden hamster).